Reading from the N-terminus, the 119-residue chain is Protein TusC (119 aa).

Belongs to the DsrF/TusC family. In terms of assembly, heterohexamer, formed by a dimer of trimers. The hexameric TusBCD complex contains 2 copies each of TusB, TusC and TusD. The TusBCD complex interacts with TusE.

It localises to the cytoplasm. Its function is as follows. Part of a sulfur-relay system required for 2-thiolation of 5-methylaminomethyl-2-thiouridine (mnm(5)s(2)U) at tRNA wobble positions. This chain is Protein TusC, found in Citrobacter koseri (strain ATCC BAA-895 / CDC 4225-83 / SGSC4696).